The primary structure comprises 540 residues: ATP-dependent RNA helicase DBP3 (540 aa).

Residues Met1–Asp35 show a composition bias toward basic and acidic residues. The interval Met1 to Lys89 is disordered. The span at Lys36–Lys52 shows a compositional bias: basic residues. Composition is skewed to basic and acidic residues over residues Glu53–Asp62 and Asp68–Glu79. Positions Leu130 to Ala156 match the Q motif motif. The 174-residue stretch at Trp159–Val332 folds into the Helicase ATP-binding domain. Ala172–Thr179 is an ATP binding site. Positions Asp279–Asp282 match the DEAD box motif. The Helicase C-terminal domain occupies Lys361–Gly510.

The protein belongs to the DEAD box helicase family. DDX5/DBP2 subfamily.

It is found in the nucleus. Its subcellular location is the nucleolus. It carries out the reaction ATP + H2O = ADP + phosphate + H(+). Functionally, ATP-dependent RNA helicase required for 60S ribosomal subunit synthesis. Involved in efficient pre-rRNA processing, predominantly at site A3, which is necessary for the normal formation of 25S and 5.8S rRNAs. The chain is ATP-dependent RNA helicase DBP3 (DBP3) from Candida glabrata (strain ATCC 2001 / BCRC 20586 / JCM 3761 / NBRC 0622 / NRRL Y-65 / CBS 138) (Yeast).